A 176-amino-acid polypeptide reads, in one-letter code: Cytochrome b (176 aa).

The next 3 helical transmembrane spans lie at 33 to 53 (FGSLLGICLALQILTGIFLAM), 77 to 98 (WVLRYLHANGASMFFICLYLHV), and 113 to 133 (WNMGVILLFAVMATAFMGYVL). Heme b is bound by residues H83 and H97.

The protein belongs to the cytochrome b family. The cytochrome bc1 complex contains 11 subunits: 3 respiratory subunits (MT-CYB, CYC1 and UQCRFS1), 2 core proteins (UQCRC1 and UQCRC2) and 6 low-molecular weight proteins (UQCRH/QCR6, UQCRB/QCR7, UQCRQ/QCR8, UQCR10/QCR9, UQCR11/QCR10 and a cleavage product of UQCRFS1). This cytochrome bc1 complex then forms a dimer. It depends on heme b as a cofactor.

It localises to the mitochondrion inner membrane. Component of the ubiquinol-cytochrome c reductase complex (complex III or cytochrome b-c1 complex) that is part of the mitochondrial respiratory chain. The b-c1 complex mediates electron transfer from ubiquinol to cytochrome c. Contributes to the generation of a proton gradient across the mitochondrial membrane that is then used for ATP synthesis. This Lasionycteris noctivagans (Silver-haired bat) protein is Cytochrome b (MT-CYB).